A 594-amino-acid chain; its full sequence is Adenine deaminase 1 (594 aa).

It belongs to the metallo-dependent hydrolases superfamily. Adenine deaminase family. Mn(2+) serves as cofactor.

The enzyme catalyses adenine + H2O + H(+) = hypoxanthine + NH4(+). This chain is Adenine deaminase 1, found in Jannaschia sp. (strain CCS1).